Here is a 176-residue protein sequence, read N- to C-terminus: Protein MAL2 (176 aa).

The Cytoplasmic portion of the chain corresponds to 1–34; sequence MSAGGASVPPPPNPAVSFPPPRVTLPAGPDILRT. The MARVEL domain occupies 31–175; the sequence is ILRTYSGAFV…SLGLALRRWR (145 aa). The chain crosses the membrane as a helical span at residues 35-55; sequence YSGAFVCLEILFGGLVWILVA. The Lumenal segment spans residues 56-66; that stretch reads SSNVPLPLLQG. A helical transmembrane segment spans residues 67-87; it reads WVMFVSVTAFFFSLLFLGMFL. Residues 88 to 102 lie on the Cytoplasmic side of the membrane; sequence SGMVAQIDANWNFLD. A helical membrane pass occupies residues 103–123; sequence FAYHFTVFVFYFGAFLLEAAA. Residues 124–149 lie on the Lumenal side of the membrane; that stretch reads TSLHDLHCNTTITGQPLLSDNQYNIN. An N-linked (GlcNAc...) asparagine glycan is attached at asparagine 132. The helical transmembrane segment at 150-170 threads the bilayer; the sequence is VAASIFAFMTTACYGCSLGLA. Residues 171-176 are Cytoplasmic-facing; the sequence is LRRWRP.

It belongs to the MAL family. As to quaternary structure, interacts with TPD52L2. In terms of tissue distribution, predominantly expressed in kidney, lung, and liver. Also found in thyroid gland, stomach and, at lower levels in testis and small intestine.

It localises to the cell membrane. Its subcellular location is the apical cell membrane. The protein resides in the endomembrane system. It is found in the cytoplasm. The protein localises to the perinuclear region. Member of the machinery of polarized transport. Required for the indirect transcytotic route at the step of the egress of the transcytosing cargo from perinuclear endosomes in order for it to travel to the apical surface via a raft-dependent pathway. The sequence is that of Protein MAL2 (MAL2) from Homo sapiens (Human).